Reading from the N-terminus, the 66-residue chain is Putative antitoxin APE_0279a.1 (66 aa).

Belongs to the UPF0165 family.

Possibly the antitoxin component of a type II toxin-antitoxin (TA) system. This is Putative antitoxin APE_0279a.1 from Aeropyrum pernix (strain ATCC 700893 / DSM 11879 / JCM 9820 / NBRC 100138 / K1).